A 289-amino-acid polypeptide reads, in one-letter code: Cell division protein ZipA (289 aa).

Residue M1 is a topological domain, periplasmic. The helical transmembrane segment at 2-22 threads the bilayer; sequence DIGLREWLIVIGLIVIAGILF. The Cytoplasmic segment spans residues 23-289; sequence DGWRRMRGGK…HERRSLMQKR (267 aa). The segment at 66 to 141 is disordered; the sequence is REPSFDEQDL…KEREKAPAVA (76 aa). The span at 81–99 shows a compositional bias: basic and acidic residues; that stretch reads REAKERKGGKRQEEPRQGD. A compositionally biased stretch (acidic residues) spans 100–114; it reads LDLDEGLALEADPSD.

Belongs to the ZipA family. As to quaternary structure, interacts with FtsZ via their C-terminal domains.

The protein resides in the cell inner membrane. Functionally, essential cell division protein that stabilizes the FtsZ protofilaments by cross-linking them and that serves as a cytoplasmic membrane anchor for the Z ring. Also required for the recruitment to the septal ring of downstream cell division proteins. This is Cell division protein ZipA from Pseudomonas aeruginosa (strain LESB58).